Here is a 134-residue protein sequence, read N- to C-terminus: Small ribosomal subunit protein uS8 (134 aa).

This sequence belongs to the universal ribosomal protein uS8 family. In terms of assembly, part of the 30S ribosomal subunit. Contacts proteins S5 and S12.

Its function is as follows. One of the primary rRNA binding proteins, it binds directly to 16S rRNA central domain where it helps coordinate assembly of the platform of the 30S subunit. The sequence is that of Small ribosomal subunit protein uS8 from Nitratiruptor sp. (strain SB155-2).